Reading from the N-terminus, the 196-residue chain is Aequorin-2 (196 aa).

A propeptide spanning residues 1–7 (MTSKQYS) is cleaved from the precursor. 4 consecutive EF-hand domains span residues 18-53 (RWIGRHKHMFNFLDVNHNGKISLDEMVYKASDIVIN), 54-108 (NLGA…AKNE), 117-146 (DALFDIVDKDQNGAITLDEWKAYTKAAGII), and 147-182 (QSSEDCEETFRVCDIDESGQLDVDEMTRQHLGFWYT). The Ca(2+) site is built by D31, N33, N35, K37, and E42. May interact with the chromophore regions lie at residues 47-57 (ASDIVINNLGA), 62-72 (AKRHKDAVEAF), and 107-117 (NEPTLIRIWGD). Ca(2+) contacts are provided by D124, D126, N128, E135, D160, D162, S164, Q166, and E171.

Belongs to the aequorin family. The reduction of the disulfide bond is necessary to regenerate aequorin from apoaequorin.

In terms of biological role, ca(2+)-dependent bioluminescence photoprotein. Displays an emission peak at 470 nm (blue light). Trace amounts of calcium ion trigger the intramolecular oxidation of the chromophore, coelenterazine into coelenteramide and CO(2) with the concomitant emission of light. This Aequorea victoria (Water jellyfish) protein is Aequorin-2.